The chain runs to 254 residues: Ferritin, chloroplastic (254 aa).

The transit peptide at Met-1–Ala-48 directs the protein to the chloroplast. An extension peptide (EP) region spans residues Ser-49 to Arg-81. A Ferritin-like diiron domain is found at Gln-82–Gly-235. Positions 99, 134, 137, 183, and 217 each coordinate Fe cation.

Belongs to the ferritin family. As to quaternary structure, oligomer of 24 subunits. There are two types of subunits: L (light) chain and H (heavy) chain. The major chain can be light or heavy, depending on the species and tissue type. The functional molecule forms a roughly spherical shell with a diameter of 12 nm and contains a central cavity into which the insoluble mineral iron core is deposited.

The protein localises to the plastid. The protein resides in the chloroplast. It catalyses the reaction 4 Fe(2+) + O2 + 4 H(+) = 4 Fe(3+) + 2 H2O. In terms of biological role, stores iron in a soluble, non-toxic, readily available form. Important for iron homeostasis. Has ferroxidase activity. Iron is taken up in the ferrous form and deposited as ferric hydroxides after oxidation. The sequence is that of Ferritin, chloroplastic (PFE) from Phaseolus vulgaris (Kidney bean).